A 249-amino-acid polypeptide reads, in one-letter code: Small ribosomal subunit protein eS6 (249 aa).

Residues 216 to 229 (RMKEAKEKRQEQIA) are compositionally biased toward basic and acidic residues. Residues 216-249 (RMKEAKEKRQEQIAKRRRLSSLRASTSKSESSQK) form a disordered region. Residues S235, S236, S240, S244, and S247 each carry the phosphoserine modification. A compositionally biased stretch (low complexity) spans 236 to 249 (SLRASTSKSESSQK).

This sequence belongs to the eukaryotic ribosomal protein eS6 family. In terms of assembly, component of the small ribosomal subunit. In terms of processing, ribosomal protein S6 is the major substrate of protein kinases in eukaryote ribosomes. The phosphorylation is stimulated by growth factors, tumor promoting agents, and mitogens. It is dephosphorylated at growth arrest.

Its subcellular location is the cytoplasm. Component of the 40S small ribosomal subunit. Plays an important role in controlling cell growth and proliferation through the selective translation of particular classes of mRNA. The polypeptide is Small ribosomal subunit protein eS6 (rps6) (Oncorhynchus mykiss (Rainbow trout)).